The chain runs to 329 residues: Strigolactones hydrolase CXE15 (329 aa).

The short motif at 83 to 85 (HGG) is the Involved in the stabilization of the negatively charged intermediate by the formation of the oxyanion hole element. Positions 85, 86, 169, and 170 each coordinate (-)-2'-epi-GR24. Ser169 acts as the Nucleophile in catalysis. Residues Glu271 and His302 contribute to the active site.

This sequence belongs to the 'GDXG' lipolytic enzyme family. Expressed in axillary buds, leaves, stems, hypocotyls, flowers, siliques, and vasculatures of shoots and roots.

The protein localises to the nucleus. The protein resides in the cytoplasm. Its subcellular location is the cytosol. The catalysed reaction is (-)-2'-epi-GR24 + H2O = (-)-2'-epi-GR24 ABC-rings + 5-hydroxy-3-methylfuran-2(5H)-one. The enzyme catalyses 5-deoxystrigol + H2O = 5-deoxystrigol ABC-rings + 5-hydroxy-3-methylfuran-2(5H)-one. It carries out the reaction orobanchol + H2O = orobanchol ABC-rings + 5-hydroxy-3-methylfuran-2(5H)-one. In terms of biological role, binds to strigolactones (SLs) such as (-)-2'-epi-GR24(4DO), 5-deoxystrigol (5DS) and orobanchol, and catalyzes their hydrolysis; SL are phytohormones controlling shoot branching and communications between plants and microorganisms. Promotes shoot branching by dampening SL-inhibited axillary bud outgrowth. This is Strigolactones hydrolase CXE15 from Arabidopsis thaliana (Mouse-ear cress).